Consider the following 198-residue polypeptide: Glutamyl-tRNA(Gln) amidotransferase subunit C, mitochondrial (198 aa).

Belongs to the GatC family. As to quaternary structure, subunit of the heterotrimeric GatCAB amidotransferase (AdT) complex, composed of A, B and C subunits.

Its subcellular location is the mitochondrion. It carries out the reaction L-glutamyl-tRNA(Gln) + L-glutamine + ATP + H2O = L-glutaminyl-tRNA(Gln) + L-glutamate + ADP + phosphate + H(+). In terms of biological role, allows the formation of correctly charged Gln-tRNA(Gln) through the transamidation of misacylated Glu-tRNA(Gln) in the mitochondria. The reaction takes place in the presence of glutamine and ATP through an activated gamma-phospho-Glu-tRNA(Gln). The sequence is that of Glutamyl-tRNA(Gln) amidotransferase subunit C, mitochondrial from Caenorhabditis remanei (Caenorhabditis vulgaris).